The primary structure comprises 79 residues: Quinohemoprotein amine dehydrogenase subunit gamma (79 aa).

The segment at residues 7–16 is a cross-link (4-cysteinyl-glutamic acid (Cys-Glu)); it reads CTATTDPGWE. Cross-links (3-cysteinyl-aspartic acid (Cys-Asp)) lie at residues 27 to 33 and 41 to 49; these read CQPMEAD and CWWPAQVPD. D33 acts as the Proton acceptor in catalysis. Positions 37–43 form a cross-link, 4'-cysteinyl-tryptophylquinone (Cys-Trp); that stretch reads CSDPCWW. W43 is modified (tryptophylquinone).

It belongs to the quinohemoprotein amine dehydrogenase subunit gamma family. As to quaternary structure, heterotrimer of an alpha, a beta and a gamma subunit. It depends on cysteine tryptophylquinone residue as a cofactor. In terms of processing, the cysteine tryptophylquinone (CTQ) is generated by oxidation of the indole ring of a tryptophan residue to form tryptophylquinone, followed by covalent cross-linking with a cysteine residue.

The protein resides in the periplasm. The catalysed reaction is an aliphatic amine + A + H2O = an aldehyde + AH2 + NH4(+). Its function is as follows. Catalyzes the oxidative deamination of a wide range of aliphatic monoamines and diamines. The physiological electron acceptor is an azurin-like blue protein. This is Quinohemoprotein amine dehydrogenase subunit gamma (qhnDH) from Pseudomonas putida (strain ATCC 47054 / DSM 6125 / CFBP 8728 / NCIMB 11950 / KT2440).